Here is a 382-residue protein sequence, read N- to C-terminus: Carboxynorspermidine/carboxyspermidine decarboxylase (382 aa).

The residue at position 41 (Lys-41) is an N6-(pyridoxal phosphate)lysine. Glu-236 and Asp-272 together coordinate substrate.

The protein belongs to the Orn/Lys/Arg decarboxylase class-II family. NspC subfamily. Homodimer. Requires pyridoxal 5'-phosphate as cofactor.

The protein resides in the cytoplasm. It catalyses the reaction carboxynorspermidine + H(+) = norspermidine + CO2. The enzyme catalyses carboxyspermidine + H(+) = spermidine + CO2. Its function is as follows. Catalyzes the decarboxylation of carboxynorspermidine and carboxyspermidine in vitro. In vivo, responsible for synthesizing spermidine, but not sym-norspermidine. This Campylobacter jejuni subsp. jejuni serotype O:6 (strain 81116 / NCTC 11828) protein is Carboxynorspermidine/carboxyspermidine decarboxylase.